The primary structure comprises 208 residues: High frequency lysogenization protein HflD homolog (208 aa).

A coiled-coil region spans residues 91-125; the sequence is LMVLERKLNANKQAMNQLGERLGQLERQLAHFDLE.

Belongs to the HflD family.

The protein localises to the cytoplasm. Its subcellular location is the cell inner membrane. This Serratia proteamaculans (strain 568) protein is High frequency lysogenization protein HflD homolog.